We begin with the raw amino-acid sequence, 172 residues long: MRASLSILVAFPALAAARDVVTIGMTGSWHPADVTEDNTKLLGTALSGSSFSKSVGDKRVCYSEVTSLETQVVAGTNYRFHISGCDVTDSDGECSTSALSSCELSGFVVQIFEQSWTNTLKVTNIKAEEAATASSSSTPAPTPASTSTSASSSEETMLQSSVQQRAMFSDFV.

A signal peptide spans 1–17 (MRASLSILVAFPALAAA). The Secondary area of contact signature appears at 71–75 (QVVAG). Residues 129-172 (EAATASSSSTPAPTPASTSTSASSSEETMLQSSVQQRAMFSDFV) form a disordered region. The segment covering 130–156 (AATASSSSTPAPTPASTSTSASSSEET) has biased composition (low complexity). Over residues 157–166 (MLQSSVQQRA) the composition is skewed to polar residues.

The protein belongs to the cystatin family.

The protein resides in the secreted. In terms of biological role, secreted effector that interacts with and inhibits host apoplastic pathogenesis-related papain-like cysteine proteases. Inhibition of host proteases by a pathogen extracellular protease inhibitor forms a specific type of defense-counterdefense mechanism between plants and microbial pathogens. The protein is Cystatin-like cysteine protease inhibitor EPIC4 of Phytophthora infestans (Potato late blight agent).